A 542-amino-acid polypeptide reads, in one-letter code: CTP synthase (542 aa).

The tract at residues 1 to 265 (MTRFIFITGG…DVQVCRHFHL (265 aa)) is amidoligase domain. Residue S13 participates in CTP binding. S13 is a binding site for UTP. ATP-binding positions include 14-19 (SLGKGL) and D71. Mg(2+)-binding residues include D71 and E139. CTP is bound by residues 146 to 148 (DIE), 186 to 191 (KTKPTQ), and K222. UTP-binding positions include 186–191 (KTKPTQ) and K222. In terms of domain architecture, Glutamine amidotransferase type-1 spans 291–541 (TIAVVGKYTS…VQAAITQSRL (251 aa)). G353 is a binding site for L-glutamine. C380 serves as the catalytic Nucleophile; for glutamine hydrolysis. L-glutamine contacts are provided by residues 381 to 384 (FGMQ), E404, and R469. Catalysis depends on residues H514 and E516.

Belongs to the CTP synthase family. As to quaternary structure, homotetramer.

The enzyme catalyses UTP + L-glutamine + ATP + H2O = CTP + L-glutamate + ADP + phosphate + 2 H(+). The catalysed reaction is L-glutamine + H2O = L-glutamate + NH4(+). It carries out the reaction UTP + NH4(+) + ATP = CTP + ADP + phosphate + 2 H(+). It functions in the pathway pyrimidine metabolism; CTP biosynthesis via de novo pathway; CTP from UDP: step 2/2. Allosterically activated by GTP, when glutamine is the substrate; GTP has no effect on the reaction when ammonia is the substrate. The allosteric effector GTP functions by stabilizing the protein conformation that binds the tetrahedral intermediate(s) formed during glutamine hydrolysis. Inhibited by the product CTP, via allosteric rather than competitive inhibition. In terms of biological role, catalyzes the ATP-dependent amination of UTP to CTP with either L-glutamine or ammonia as the source of nitrogen. Regulates intracellular CTP levels through interactions with the four ribonucleotide triphosphates. The chain is CTP synthase from Rhodospirillum rubrum (strain ATCC 11170 / ATH 1.1.1 / DSM 467 / LMG 4362 / NCIMB 8255 / S1).